Reading from the N-terminus, the 281-residue chain is MNYIGAHVSSSGGLEKTVLRAIQIKATAFSFFTKNQRQWFSPPLIQKKIDQFKAMCIKYSFQPQQILPHSSYLINLGHPIDELLRKSRKSFIDEMIRCSQLGLIFLNFHPGSHLNKITENACLLRVSDSINIALEKTQNVIAVIENTAGQGTNIGYCFEHLSEIIKNIDDKSRVGVCIDTCHLFASGYDLRTKKDCENTFEKFNSLIGLKYLKGIHLNDSKKKINSRVDRHESLGLGEIGTAAFTWIIKNENFSNIPIILETANPMIWEEEIDWLRSQKKL.

H69, H109, E145, D179, H182, H216, D229, H231, and E261 together coordinate Zn(2+).

This sequence belongs to the AP endonuclease 2 family. Zn(2+) serves as cofactor.

The enzyme catalyses Endonucleolytic cleavage to 5'-phosphooligonucleotide end-products.. Functionally, endonuclease IV plays a role in DNA repair. It cleaves phosphodiester bonds at apurinic or apyrimidinic (AP) sites, generating a 3'-hydroxyl group and a 5'-terminal sugar phosphate. The polypeptide is Probable endonuclease 4 (Buchnera aphidicola subsp. Acyrthosiphon pisum (strain APS) (Acyrthosiphon pisum symbiotic bacterium)).